We begin with the raw amino-acid sequence, 130 residues long: Small ribosomal subunit protein uS8 (130 aa).

The protein belongs to the universal ribosomal protein uS8 family. Part of the 30S ribosomal subunit. Contacts proteins S5 and S12.

One of the primary rRNA binding proteins, it binds directly to 16S rRNA central domain where it helps coordinate assembly of the platform of the 30S subunit. In Vibrio atlanticus (strain LGP32) (Vibrio splendidus (strain Mel32)), this protein is Small ribosomal subunit protein uS8.